Consider the following 596-residue polypeptide: Arginine--tRNA ligase (596 aa).

Positions 128-138 match the 'HIGH' region motif; it reads ANPTSSLHVGH.

Belongs to the class-I aminoacyl-tRNA synthetase family. Monomer.

The protein localises to the cytoplasm. It catalyses the reaction tRNA(Arg) + L-arginine + ATP = L-arginyl-tRNA(Arg) + AMP + diphosphate. This Acinetobacter baylyi (strain ATCC 33305 / BD413 / ADP1) protein is Arginine--tRNA ligase.